The sequence spans 441 residues: ATP-dependent protease ATPase subunit HslU (441 aa).

ATP-binding positions include Ile-18, 60-65, Asp-254, Glu-319, and Arg-391; that span reads GVGKTE.

The protein belongs to the ClpX chaperone family. HslU subfamily. In terms of assembly, a double ring-shaped homohexamer of HslV is capped on each side by a ring-shaped HslU homohexamer. The assembly of the HslU/HslV complex is dependent on binding of ATP.

It is found in the cytoplasm. Functionally, ATPase subunit of a proteasome-like degradation complex; this subunit has chaperone activity. The binding of ATP and its subsequent hydrolysis by HslU are essential for unfolding of protein substrates subsequently hydrolyzed by HslV. HslU recognizes the N-terminal part of its protein substrates and unfolds these before they are guided to HslV for hydrolysis. The polypeptide is ATP-dependent protease ATPase subunit HslU (Actinobacillus succinogenes (strain ATCC 55618 / DSM 22257 / CCUG 43843 / 130Z)).